The primary structure comprises 642 residues: Forkhead box protein K2 (642 aa).

The FHA domain maps to 30 to 91 (VTIGRNSSQG…NGVFVDGVFQ (62 aa)). A disordered region spans residues 201–221 (QSENDKDASGGDSPKDDSKPP). Residues 203–219 (ENDKDASGGDSPKDDSK) show a composition bias toward basic and acidic residues. A DNA-binding region (fork-head) is located at residues 219-314 (KPPYSYAQLI…EQAFRKRRPR (96 aa)). The tract at residues 261–279 (KGWQNSIRHNLSLNRYFIK) is DNA-binding; major groove. Positions 271, 272, 274, and 277 each coordinate Mg(2+). DNA-binding; minor groove regions lie at residues 289 to 293 (KGSFW) and 309 to 314 (RKRRPR). Disordered stretches follow at residues 323–359 (LGPLSSRSAPASPNHSGVFSAHSSGVQTPESLSREGS) and 589–615 (ASASLPTKRQNGDQSEQPDIKRGKTDE). 2 stretches are compositionally biased toward polar residues: residues 327-353 (SSRSAPASPNHSGVFSAHSSGVQTPES) and 589-605 (ASASLPTKRQNGDQSEQ). Basic and acidic residues predominate over residues 606 to 615 (PDIKRGKTDE).

In terms of tissue distribution, in neurula embryos, expressed strongly in the future floor plate and weakly in the neural crest progenitor cells. As development progresses, expression becomes stronger in neural crest cells. At stage 24, expressed in the eye, brain, branchial arches and in the presomitic mesoderm in the posterior embryo. At stage 29, additionally expressed in the pronephric tubules. At stage 35, expressed in the migrating lateral muscle precursors of the abdomen. Additionally, the developing proctodeum and head structures including the branchial arches, eyes and otic vesicles continue to show expression. Expression also persists in the nephros.

Its subcellular location is the nucleus. It is found in the cytoplasm. Its function is as follows. Transcriptional regulator involved in different processes such as glucose metabolism, aerobic glycolysis and autophagy. Recognizes and binds the forkhead DNA sequence motif (5'-GTAAACA-3') and can both act as a transcription activator or repressor, depending on the context. Acts as a key regulator of metabolic reprogramming towards aerobic glycolysis, a process in which glucose is converted to lactate in the presence of oxygen. Acts as a negative regulator of autophagy in skeletal muscle: in response to starvation, enters the nucleus, binds the promoters of autophagy genes and represses their expression, preventing proteolysis of skeletal muscle proteins. The chain is Forkhead box protein K2 from Xenopus laevis (African clawed frog).